Reading from the N-terminus, the 247-residue chain is MNVLSCSINTLNGLYDISGVEVGQHFYWKIGGFQVHGQVLITSWVVIAILLASATLAVRNPQTIPTSGQNFFEYVLEFIRDVSKTQIGEEYGPWVPFIGTMFLFIFVSNWSGALLPWKIIQLPHGELAAPTNDINTTVALALLTSVAYFYAGLSKKGLGYFGKYIQPTPILLPINILEDFTKPLSLSFRLFGNILADELVVVVLVSLVPSVVPIPVMFLGLFTSGIQALIFATLAAAYIGESMEGHH.

The next 5 membrane-spanning stretches (helical) occupy residues 38–58 (QVLITSWVVIAILLASATLAV), 95–115 (VPFIGTMFLFIFVSNWSGALL), 134–154 (INTTVALALLTSVAYFYAGLS), 199–219 (LVVVVLVSLVPSVVPIPVMFL), and 220–240 (GLFTSGIQALIFATLAAAYIG).

This sequence belongs to the ATPase A chain family. As to quaternary structure, F-type ATPases have 2 components, CF(1) - the catalytic core - and CF(0) - the membrane proton channel. CF(1) has five subunits: alpha(3), beta(3), gamma(1), delta(1), epsilon(1). CF(0) has four main subunits: a, b, b' and c.

It localises to the plastid. It is found in the chloroplast thylakoid membrane. Its function is as follows. Key component of the proton channel; it plays a direct role in the translocation of protons across the membrane. The sequence is that of ATP synthase subunit a, chloroplastic from Lactuca sativa (Garden lettuce).